The chain runs to 90 residues: [Leu8]-phyllolitorin (90 aa).

The first 30 residues, 1–30 (MSAVPFTRVLLISGFLAHLLLSTFVTLTVC), serve as a signal peptide directing secretion. Positions 31-48 (KEVTEESDDLSKRNVLQR) are excised as a propeptide. Glutamine 49 carries the post-translational modification Pyrrolidone carboxylic acid. A Methionine amide modification is found at methionine 57. A propeptide spanning residues 61–90 (SLENTNRRSDEDMEISALFRGSPLKVKRSD) is cleaved from the precursor.

It belongs to the bombesin/neuromedin-B/ranatensin family. Expressed by the skin glands.

The protein localises to the secreted. This Phyllomedusa sauvagei (Sauvage's leaf frog) protein is [Leu8]-phyllolitorin.